Here is a 279-residue protein sequence, read N- to C-terminus: Sulfur carrier protein FdhD (279 aa).

The Cysteine persulfide intermediate role is filled by Cys122.

It belongs to the FdhD family.

The protein localises to the cytoplasm. In terms of biological role, required for formate dehydrogenase (FDH) activity. Acts as a sulfur carrier protein that transfers sulfur from IscS to the molybdenum cofactor prior to its insertion into FDH. The sequence is that of Sulfur carrier protein FdhD from Thermoplasma volcanium (strain ATCC 51530 / DSM 4299 / JCM 9571 / NBRC 15438 / GSS1).